The primary structure comprises 340 residues: MDSTFTGYNLYNLQVKTEMDKLSSGLDIYRNPLKNKTEVTMFILTGFTDDFELQVFLFLLFFAIYLFTLIGNLGLVVLVIEDSWLHNPMYYFLSVLSFLDACYSTVVTPKMLVNFLAKNKSISFIGCATQMLLFVTFGTTECFLLAAMAYDHYVAIYNPLLYSVSMSPRVYVPLITASYVAGILHATIHIVATFSLSFCGSNEIRHVFCDMPPLLAISCSDTHTNQLLLFYFVGSIEIVTILIVLISCDFILLSILKMHSAKGRQKAFSTCGSHLTGVTIYHGTILVSYMRPSSSYASDHDIIVSIFYTIVIPKLNPIIYSLRNKEVKKAVKKMLKLVYK.

The Extracellular portion of the chain corresponds to 1-55; sequence MDSTFTGYNLYNLQVKTEMDKLSSGLDIYRNPLKNKTEVTMFILTGFTDDFELQV. N-linked (GlcNAc...) asparagine glycosylation occurs at Asn-35. A helical transmembrane segment spans residues 56-76; the sequence is FLFLLFFAIYLFTLIGNLGLV. Residues 77–84 are Cytoplasmic-facing; sequence VLVIEDSW. The chain crosses the membrane as a helical span at residues 85–105; sequence LHNPMYYFLSVLSFLDACYST. Topologically, residues 106 to 129 are extracellular; that stretch reads VVTPKMLVNFLAKNKSISFIGCAT. A glycan (N-linked (GlcNAc...) asparagine) is linked at Asn-119. Cys-127 and Cys-219 are oxidised to a cystine. The helical transmembrane segment at 130 to 150 threads the bilayer; the sequence is QMLLFVTFGTTECFLLAAMAY. Over 151–169 the chain is Cytoplasmic; sequence DHYVAIYNPLLYSVSMSPR. A helical membrane pass occupies residues 170–190; the sequence is VYVPLITASYVAGILHATIHI. Residues 191–226 lie on the Extracellular side of the membrane; it reads VATFSLSFCGSNEIRHVFCDMPPLLAISCSDTHTNQ. The helical transmembrane segment at 227–247 threads the bilayer; sequence LLLFYFVGSIEIVTILIVLIS. Residues 248-267 are Cytoplasmic-facing; sequence CDFILLSILKMHSAKGRQKA. Residues 268–288 form a helical membrane-spanning segment; it reads FSTCGSHLTGVTIYHGTILVS. Topologically, residues 289 to 301 are extracellular; that stretch reads YMRPSSSYASDHD. The chain crosses the membrane as a helical span at residues 302-322; the sequence is IIVSIFYTIVIPKLNPIIYSL. Topologically, residues 323–340 are cytoplasmic; it reads RNKEVKKAVKKMLKLVYK.

The protein belongs to the G-protein coupled receptor 1 family.

The protein resides in the cell membrane. Its function is as follows. Odorant receptor. This chain is Olfactory receptor 5T3 (OR5T3), found in Homo sapiens (Human).